A 203-amino-acid polypeptide reads, in one-letter code: Glycerol-3-phosphate acyltransferase (203 aa).

A run of 4 helical transmembrane segments spans residues 4 to 24 (LVLL…AVLI), 80 to 100 (PFLL…PIFF), 116 to 136 (APIG…TVFI), and 138 to 158 (GYSS…TWFV).

Belongs to the PlsY family. In terms of assembly, probably interacts with PlsX.

The protein localises to the cell inner membrane. The enzyme catalyses an acyl phosphate + sn-glycerol 3-phosphate = a 1-acyl-sn-glycero-3-phosphate + phosphate. The protein operates within lipid metabolism; phospholipid metabolism. Its function is as follows. Catalyzes the transfer of an acyl group from acyl-phosphate (acyl-PO(4)) to glycerol-3-phosphate (G3P) to form lysophosphatidic acid (LPA). This enzyme utilizes acyl-phosphate as fatty acyl donor, but not acyl-CoA or acyl-ACP. This chain is Glycerol-3-phosphate acyltransferase, found in Photobacterium profundum (strain SS9).